Consider the following 334-residue polypeptide: Ketol-acid reductoisomerase (NADP(+)) (334 aa).

The KARI N-terminal Rossmann domain occupies 2-182 (PKMYYEKDTD…GGARAGVLET (181 aa)). Residues 25–28 (YGSQ), Ser-51, Ser-53, and 83–86 (DEKQ) contribute to the NADP(+) site. Residue His-108 is part of the active site. Residue Gly-134 participates in NADP(+) binding. In terms of domain architecture, KARI C-terminal knotted spans 183–328 (TFKDETETDL…KELRGMMSWI (146 aa)). Positions 191, 195, 227, and 231 each coordinate Mg(2+). Substrate is bound at residue Ser-252.

This sequence belongs to the ketol-acid reductoisomerase family. Mg(2+) is required as a cofactor.

It carries out the reaction (2R)-2,3-dihydroxy-3-methylbutanoate + NADP(+) = (2S)-2-acetolactate + NADPH + H(+). The catalysed reaction is (2R,3R)-2,3-dihydroxy-3-methylpentanoate + NADP(+) = (S)-2-ethyl-2-hydroxy-3-oxobutanoate + NADPH + H(+). Its pathway is amino-acid biosynthesis; L-isoleucine biosynthesis; L-isoleucine from 2-oxobutanoate: step 2/4. It participates in amino-acid biosynthesis; L-valine biosynthesis; L-valine from pyruvate: step 2/4. Involved in the biosynthesis of branched-chain amino acids (BCAA). Catalyzes an alkyl-migration followed by a ketol-acid reduction of (S)-2-acetolactate (S2AL) to yield (R)-2,3-dihydroxy-isovalerate. In the isomerase reaction, S2AL is rearranged via a Mg-dependent methyl migration to produce 3-hydroxy-3-methyl-2-ketobutyrate (HMKB). In the reductase reaction, this 2-ketoacid undergoes a metal-dependent reduction by NADPH to yield (R)-2,3-dihydroxy-isovalerate. The polypeptide is Ketol-acid reductoisomerase (NADP(+)) (Clostridium beijerinckii (strain ATCC 51743 / NCIMB 8052) (Clostridium acetobutylicum)).